The chain runs to 344 residues: N-acetyl-gamma-glutamyl-phosphate reductase (344 aa).

The active site involves cysteine 147.

This sequence belongs to the NAGSA dehydrogenase family. Type 1 subfamily.

It is found in the cytoplasm. The catalysed reaction is N-acetyl-L-glutamate 5-semialdehyde + phosphate + NADP(+) = N-acetyl-L-glutamyl 5-phosphate + NADPH + H(+). Its pathway is amino-acid biosynthesis; L-arginine biosynthesis; N(2)-acetyl-L-ornithine from L-glutamate: step 3/4. In terms of biological role, catalyzes the NADPH-dependent reduction of N-acetyl-5-glutamyl phosphate to yield N-acetyl-L-glutamate 5-semialdehyde. This Bacillus amyloliquefaciens (Bacillus velezensis) protein is N-acetyl-gamma-glutamyl-phosphate reductase.